The primary structure comprises 76 residues: ATP synthase subunit 9, mitochondrial (76 aa).

Helical transmembrane passes span 13–35 (GISTIGLLGAGIGIAIVFAALIQ) and 50–72 (FAILGFAISEATGLFCLMISFLL).

It belongs to the ATPase C chain family. In terms of assembly, F-type ATPases have 2 components, CF(1) - the catalytic core - and CF(0) - the membrane proton channel. In yeast, the dimeric form of ATP synthase consists of 18 polypeptides: alpha, beta, gamma, delta, epsilon, 4 (B), 5 (OSCP), 6 (A), 8, 9 (C), d, E (Tim11), f, g, h, i, j and k.

It is found in the mitochondrion membrane. In terms of biological role, mitochondrial membrane ATP synthase (F(1)F(0) ATP synthase or Complex V) produces ATP from ADP in the presence of a proton gradient across the membrane which is generated by electron transport complexes of the respiratory chain. F-type ATPases consist of two structural domains, F(1) - containing the extramembraneous catalytic core and F(0) - containing the membrane proton channel, linked together by a central stalk and a peripheral stalk. During catalysis, ATP synthesis in the catalytic domain of F(1) is coupled via a rotary mechanism of the central stalk subunits to proton translocation. Part of the complex F(0) domain. A homomeric c-ring of probably 10 subunits is part of the complex rotary element. This Eremothecium gossypii (strain ATCC 10895 / CBS 109.51 / FGSC 9923 / NRRL Y-1056) (Yeast) protein is ATP synthase subunit 9, mitochondrial (ATP9).